The following is a 517-amino-acid chain: 2,3-bisphosphoglycerate-independent phosphoglycerate mutase 1 (517 aa).

Mn(2+) contacts are provided by D17 and S67. The active-site Phosphoserine intermediate is the S67. Substrate-binding positions include H128, 158–159 (RD), R190, R196, 267–270 (RPDR), and K340. Mn(2+) contacts are provided by D407, H411, D448, H449, and H467.

This sequence belongs to the BPG-independent phosphoglycerate mutase family. Mn(2+) serves as cofactor.

It catalyses the reaction (2R)-2-phosphoglycerate = (2R)-3-phosphoglycerate. Its pathway is carbohydrate degradation; glycolysis; pyruvate from D-glyceraldehyde 3-phosphate: step 3/5. Catalyzes the interconversion of 2-phosphoglycerate and 3-phosphoglycerate. This Methanosarcina barkeri (strain Fusaro / DSM 804) protein is 2,3-bisphosphoglycerate-independent phosphoglycerate mutase 1.